The primary structure comprises 214 residues: MDFNQSFEDIESQLDNFVIRKNQQSEKSTGKCGPEVHDNVPLTISQIERATQDPENENVFITDDVHPIHFCTCIIYAFVTGNGTHNESFMKFMIDDGTGSLEASITKKPFNGRVISSLYSEASSLASSEAYKSIAVSMMRLLQVSMEYIDPTRISRGHSLFLRGRPNRFRGKMGLDAFQFFIDSGRSRNMEIGFVDYLTDWQRRHKTMQNTTNK.

Probably homomultimerizes. Component of the MTV complex, composed of moi/modigliani, tea and ver/verrocchio. Interacts with moi/modigliani and tea (via C-terminus); the interactions are direct and require fully intact moi/modigliani and ver/verrocchio. The MTV complex is recruited to telomeres by the HipHop-HOAP complex, consisting of HipHop, cav/HOAP and Su(var)205/HP1 to form the terminin telomere-capping complex. Interacts with cav/HOAP; the interaction is direct. Interacts with Su(var)205/HP1; the interaction is indirect and probably requires cav/HOAP or moi/modigliani. Probably interacts with peo (via N-terminus and UBC domain).

It is found in the nucleus. The protein resides in the chromosome. The protein localises to the telomere. Part of the MTV complex that associates with the HipHop-HOAP complex to form the terminin telomere-capping complex involved in telomere maintenance and prevention of telomere fusion. As part of the MTV complex binds single stranded DNA in a sequence-independent manner, protecting it from degradation. In Drosophila melanogaster (Fruit fly), this protein is Protein verrocchio.